A 283-amino-acid chain; its full sequence is Ribonuclease P protein subunit p38 (283 aa).

At alanine 2 the chain carries N-acetylalanine. Phosphoserine occurs at positions 12, 226, and 235.

Belongs to the eukaryotic ribosomal protein eL8 family. Component of nuclear RNase P and RNase MRP ribonucleoproteins. RNase P consists of a catalytic RNA moiety and about 10 protein subunits; POP1, POP4, POP5, POP7, RPP14, RPP21, RPP25, RPP30, RPP38 and RPP40. Within the RNase P complex, POP1, POP7 and RPP25 form the 'finger' subcomplex, POP5, RPP14, RPP40 and homodimeric RPP30 form the 'palm' subcomplex, and RPP21, POP4 and RPP38 form the 'wrist' subcomplex. All subunits of the RNase P complex interact with the catalytic RNA. Several subunits of RNase P are also part of the RNase MRP complex. RNase MRP consists of a catalytic RNA moiety and about 8 protein subunits; POP1, POP7, RPP25, RPP30, RPP38, RPP40 and possibly also POP4 and POP5.

It localises to the nucleus. Its subcellular location is the nucleolus. In terms of biological role, component of ribonuclease P, a ribonucleoprotein complex that generates mature tRNA molecules by cleaving their 5'-ends. Also a component of the MRP ribonuclease complex, which cleaves pre-rRNA sequences. The chain is Ribonuclease P protein subunit p38 (RPP38) from Homo sapiens (Human).